We begin with the raw amino-acid sequence, 99 residues long: Cell division protein FtsB (99 aa).

Residues 1–3 lie on the Cytoplasmic side of the membrane; sequence MKF. The helical transmembrane segment at 4-21 threads the bilayer; the sequence is FVIALIVLLGLLQYRLWS. Residues 22–99 are Periplasmic-facing; sequence GDNSLPEYFV…GDRSVSSPSQ (78 aa). Residues 31 to 73 adopt a coiled-coil conformation; that stretch reads VLQKQIAAQQEGNAKLNERNQVLKEEIIDLKSGTEAIEERARN.

It belongs to the FtsB family. As to quaternary structure, part of a complex composed of FtsB, FtsL and FtsQ.

The protein localises to the cell inner membrane. In terms of biological role, essential cell division protein. May link together the upstream cell division proteins, which are predominantly cytoplasmic, with the downstream cell division proteins, which are predominantly periplasmic. This is Cell division protein FtsB from Shewanella sp. (strain ANA-3).